We begin with the raw amino-acid sequence, 189 residues long: TATA-box-binding protein 1 (189 aa).

2 consecutive repeat copies span residues 10 to 86 (IENV…FDKL) and 101 to 179 (VQNI…ISRL).

This sequence belongs to the TBP family.

In terms of biological role, general factor that plays a role in the activation of archaeal genes transcribed by RNA polymerase. Binds specifically to the TATA box promoter element which lies close to the position of transcription initiation. This is TATA-box-binding protein 1 (tbp1) from Haloferax volcanii (strain ATCC 29605 / DSM 3757 / JCM 8879 / NBRC 14742 / NCIMB 2012 / VKM B-1768 / DS2) (Halobacterium volcanii).